The following is a 348-amino-acid chain: NADH-quinone oxidoreductase subunit H (348 aa).

The next 9 helical transmembrane spans lie at 13–33, 50–70, 82–102, 115–135, 161–181, 198–218, 258–278, 285–305, and 321–341; these read LIMV…IAFL, PNVV…KFIL, AVFL…YAVI, VGIL…IMGG, IGLV…TDIV, FLDW…ISGL, AIVL…LPIV, WVPG…MIAL, and LGWK…AFVL.

The protein belongs to the complex I subunit 1 family. As to quaternary structure, NDH-1 is composed of 14 different subunits. Subunits NuoA, H, J, K, L, M, N constitute the membrane sector of the complex.

The protein localises to the cell inner membrane. It carries out the reaction a quinone + NADH + 5 H(+)(in) = a quinol + NAD(+) + 4 H(+)(out). In terms of biological role, NDH-1 shuttles electrons from NADH, via FMN and iron-sulfur (Fe-S) centers, to quinones in the respiratory chain. The immediate electron acceptor for the enzyme in this species is believed to be ubiquinone. Couples the redox reaction to proton translocation (for every two electrons transferred, four hydrogen ions are translocated across the cytoplasmic membrane), and thus conserves the redox energy in a proton gradient. This subunit may bind ubiquinone. This is NADH-quinone oxidoreductase subunit H from Agrobacterium fabrum (strain C58 / ATCC 33970) (Agrobacterium tumefaciens (strain C58)).